Reading from the N-terminus, the 243-residue chain is 3,4-dihydroxyphthalate decarboxylase (243 aa).

The Proton donor/acceptor role is filled by E86. A divalent metal cation is bound by residues E86, H105, H107, and H173.

This sequence belongs to the aldolase class II family. A divalent metal cation serves as cofactor.

It carries out the reaction 3,4-dihydroxyphthalate + H(+) = 3,4-dihydroxybenzoate + CO2. It participates in xenobiotic degradation; phthalate degradation. Its function is as follows. Catalyzes the decarboxylation of 3,4-dihydroxyphthalate to protocatechuate (3,4-dihydroxybenzoate) during phthalate metabolism. The sequence is that of 3,4-dihydroxyphthalate decarboxylase from Rhodococcus jostii (strain RHA1).